The chain runs to 683 residues: Glucosylceramidase (683 aa).

The Proton donor role is filled by E254. Residue E483 is the Nucleophile of the active site.

Belongs to the glycosyl hydrolase 5 (cellulase A) family.

It localises to the membrane. It carries out the reaction a beta-D-glucosyl-(1&lt;-&gt;1')-N-acylsphing-4-enine + H2O = an N-acylsphing-4-enine + D-glucose. Inhibited by metal cations Co(2+), Cu(2+), Ni(2+), Pb(2+) and Zn(2+). Not inhibited by metal chelator ethylenediaminetetraacetic acid (EDTA). In terms of biological role, specifically hydrolyzes the glucosidic linkage in glucosylceramide. May prevent accumulation of aberrent glucosylceramide containing immature ceramide. This Rhizopus delemar (strain RA 99-880 / ATCC MYA-4621 / FGSC 9543 / NRRL 43880) (Mucormycosis agent) protein is Glucosylceramidase.